Here is a 689-residue protein sequence, read N- to C-terminus: DNA topoisomerase 1 (689 aa).

Positions 3 to 113 constitute a Toprim domain; it reads DNLVIVESPA…KENRVVFNEI (111 aa). Positions 9 and 82 each coordinate Mg(2+). The 429-residue stretch at 129–557 folds into the Topo IA-type catalytic domain; that stretch reads EMNLVDAQQA…FFSSFKQDVE (429 aa). Residues 163-168 form an interaction with DNA region; the sequence is SAGRVQ. Residue Y298 is the O-(5'-phospho-DNA)-tyrosine intermediate of the active site. The tract at residues 328–357 is disordered; the sequence is SKRKASGKQGDQDAHEAIRPSSTMRTPDDM. 3 C4-type zinc fingers span residues 577–603, 617–645, and 658–681; these read CEVCGSPMVIKMGRYGKFMACSNFPDC, CPKCNDGDVVERKSKKNRVFYGCSKYPEC, and CPKCNQYLVENKKGKTTQVICSNC.

The protein belongs to the type IA topoisomerase family. In terms of assembly, monomer. It depends on Mg(2+) as a cofactor.

It carries out the reaction ATP-independent breakage of single-stranded DNA, followed by passage and rejoining.. In terms of biological role, releases the supercoiling and torsional tension of DNA, which is introduced during the DNA replication and transcription, by transiently cleaving and rejoining one strand of the DNA duplex. Introduces a single-strand break via transesterification at a target site in duplex DNA. The scissile phosphodiester is attacked by the catalytic tyrosine of the enzyme, resulting in the formation of a DNA-(5'-phosphotyrosyl)-enzyme intermediate and the expulsion of a 3'-OH DNA strand. The free DNA strand then undergoes passage around the unbroken strand, thus removing DNA supercoils. Finally, in the religation step, the DNA 3'-OH attacks the covalent intermediate to expel the active-site tyrosine and restore the DNA phosphodiester backbone. This is DNA topoisomerase 1 from Staphylococcus aureus (strain bovine RF122 / ET3-1).